The chain runs to 345 residues: UDP-N-acetylenolpyruvoylglucosamine reductase (345 aa).

The FAD-binding PCMH-type domain maps to 59-254 (VGGPAACLAR…RKATQPLGRP (196 aa)). The active site involves arginine 209. Residue cysteine 258 is the Proton donor of the active site. Glutamate 328 is a catalytic residue.

Belongs to the MurB family. FAD serves as cofactor.

It localises to the cytoplasm. The enzyme catalyses UDP-N-acetyl-alpha-D-muramate + NADP(+) = UDP-N-acetyl-3-O-(1-carboxyvinyl)-alpha-D-glucosamine + NADPH + H(+). Its pathway is cell wall biogenesis; peptidoglycan biosynthesis. Functionally, cell wall formation. This chain is UDP-N-acetylenolpyruvoylglucosamine reductase, found in Syntrophobacter fumaroxidans (strain DSM 10017 / MPOB).